A 467-amino-acid chain; its full sequence is Uronate isomerase (467 aa).

This sequence belongs to the metallo-dependent hydrolases superfamily. Uronate isomerase family.

It catalyses the reaction D-glucuronate = D-fructuronate. It carries out the reaction aldehydo-D-galacturonate = keto-D-tagaturonate. It functions in the pathway carbohydrate metabolism; pentose and glucuronate interconversion. The sequence is that of Uronate isomerase from Solibacter usitatus (strain Ellin6076).